We begin with the raw amino-acid sequence, 509 residues long: Anaerobic nitric oxide reductase transcription regulator NorR (509 aa).

Asp-56 carries the post-translational modification 4-aspartylphosphate. Residues 186 to 415 (MIGRSPAMDR…LEHAIHRAAV (230 aa)) form the Sigma-54 factor interaction domain. ATP is bound by residues 214-221 (GETGVGKE) and 277-286 (ADKGTLFLDE). The segment at residues 484 to 503 (WAATARALEMDGGNLHRLAR) is a DNA-binding region (H-T-H motif).

It functions in the pathway nitrogen metabolism; nitric oxide reduction. Functionally, required for the expression of anaerobic nitric oxide (NO) reductase, acts as a transcriptional activator for at least the norVW operon. Activation also requires sigma-54. The sequence is that of Anaerobic nitric oxide reductase transcription regulator NorR from Aeromonas salmonicida (strain A449).